The following is a 119-amino-acid chain: ATP-dependent Clp protease adapter protein ClpS (119 aa).

Residues 1–33 form a disordered region; that stretch reads MATRIPKTPSTPPAQKPAGDDGDSVVLERRPQK.

It belongs to the ClpS family. As to quaternary structure, binds to the N-terminal domain of the chaperone ClpA.

Functionally, involved in the modulation of the specificity of the ClpAP-mediated ATP-dependent protein degradation. This is ATP-dependent Clp protease adapter protein ClpS from Variovorax paradoxus (strain S110).